The following is a 306-amino-acid chain: MNAKLSSSGMVLKELPEVALQKISSNYYWAVFAVFLLCAIVFPLVSIFSLPQKQTYHRFFSILSLVSCLAYFTMACNYGLKNVFSSASFFREVSVRMVYYVRYIQWLINFPLIIVMLHWTVGVSILEIAYVVCYVLFAIVCLLAAALTSSPYKWAYYGFSFVGYFIALAHSVVLHKKYASRLETSARLGFLWSIVYLHVIWFLYYACWILSEGLNVISPIGEAIFYSILDLFEFGFFGAAFSWMLDLVGIENFKSPQSIPLGACSPADDKFSMCPDMEAQNQADDLAVETRIQISNLPSSPTKNNC.

A run of 7 helical transmembrane segments spans residues 28-48, 59-79, 103-123, 125-145, 154-174, 190-210, and 224-244; these read YWAV…VSIF, FFSI…CNYG, YIQW…TVGV, ILEI…LLAA, WAYY…SVVL, FLWS…CWIL, and IFYS…FSWM.

This sequence belongs to the archaeal/bacterial/fungal opsin family.

The protein resides in the membrane. Its function is as follows. Has a role in meiosis. The sequence is that of Meiotically up-regulated gene 73 protein (mug73) from Schizosaccharomyces pombe (strain 972 / ATCC 24843) (Fission yeast).